The following is a 180-amino-acid chain: CASP-like protein XL3 (180 aa).

Over methionine 1–lysine 7 the chain is Cytoplasmic. A helical transmembrane segment spans residues isoleucine 8 to glycine 28. The Extracellular portion of the chain corresponds to leucine 29–arginine 49. A helical membrane pass occupies residues alanine 50–cysteine 70. The Cytoplasmic segment spans residues cysteine 71 to glutamine 98. A helical membrane pass occupies residues alanine 99–leucine 119. The Extracellular portion of the chain corresponds to threonine 120 to glutamine 140. A helical membrane pass occupies residues isoleucine 141–isoleucine 161. The Cytoplasmic segment spans residues serine 162 to leucine 180.

It belongs to the Casparian strip membrane proteins (CASP) family. As to quaternary structure, homodimer and heterodimers.

The protein resides in the cell membrane. The chain is CASP-like protein XL3 (XL3) from Gossypium hirsutum (Upland cotton).